The following is a 639-amino-acid chain: 1-deoxy-D-xylulose-5-phosphate synthase (639 aa).

Thiamine diphosphate contacts are provided by residues His79 and 120–122; that span reads GHS. Asp151 lines the Mg(2+) pocket. Thiamine diphosphate is bound by residues 152 to 153, Asn180, Tyr288, and Glu370; that span reads GG. Asn180 contacts Mg(2+).

The protein belongs to the transketolase family. DXPS subfamily. As to quaternary structure, homodimer. Mg(2+) serves as cofactor. Requires thiamine diphosphate as cofactor.

It catalyses the reaction D-glyceraldehyde 3-phosphate + pyruvate + H(+) = 1-deoxy-D-xylulose 5-phosphate + CO2. Its pathway is metabolic intermediate biosynthesis; 1-deoxy-D-xylulose 5-phosphate biosynthesis; 1-deoxy-D-xylulose 5-phosphate from D-glyceraldehyde 3-phosphate and pyruvate: step 1/1. Catalyzes the acyloin condensation reaction between C atoms 2 and 3 of pyruvate and glyceraldehyde 3-phosphate to yield 1-deoxy-D-xylulose-5-phosphate (DXP). In Methylococcus capsulatus (strain ATCC 33009 / NCIMB 11132 / Bath), this protein is 1-deoxy-D-xylulose-5-phosphate synthase.